The chain runs to 106 residues: Iron-sulfur cluster assembly protein CyaY (106 aa).

It belongs to the frataxin family.

In terms of biological role, involved in iron-sulfur (Fe-S) cluster assembly. May act as a regulator of Fe-S biogenesis. The chain is Iron-sulfur cluster assembly protein CyaY from Yersinia pseudotuberculosis serotype O:3 (strain YPIII).